The sequence spans 385 residues: Probable dual-specificity RNA methyltransferase RlmN (385 aa).

Residues 1-24 (MTATTAESGNLLPLVSGRSRPPRH) are disordered. E114 (proton acceptor) is an active-site residue. The Radical SAM core domain maps to 120–364 (YPQRATVCVS…AATVRDTRGR (245 aa)). Cysteines 127 and 370 form a disulfide. 3 residues coordinate [4Fe-4S] cluster: C134, C138, and C141. Residues 194–195 (GE), S228, 251–253 (SLH), and N327 each bind S-adenosyl-L-methionine. C370 functions as the S-methylcysteine intermediate in the catalytic mechanism.

Belongs to the radical SAM superfamily. RlmN family. It depends on [4Fe-4S] cluster as a cofactor.

It is found in the cytoplasm. It catalyses the reaction adenosine(2503) in 23S rRNA + 2 reduced [2Fe-2S]-[ferredoxin] + 2 S-adenosyl-L-methionine = 2-methyladenosine(2503) in 23S rRNA + 5'-deoxyadenosine + L-methionine + 2 oxidized [2Fe-2S]-[ferredoxin] + S-adenosyl-L-homocysteine. The catalysed reaction is adenosine(37) in tRNA + 2 reduced [2Fe-2S]-[ferredoxin] + 2 S-adenosyl-L-methionine = 2-methyladenosine(37) in tRNA + 5'-deoxyadenosine + L-methionine + 2 oxidized [2Fe-2S]-[ferredoxin] + S-adenosyl-L-homocysteine. In terms of biological role, specifically methylates position 2 of adenine 2503 in 23S rRNA and position 2 of adenine 37 in tRNAs. This Parafrankia sp. (strain EAN1pec) protein is Probable dual-specificity RNA methyltransferase RlmN.